The primary structure comprises 122 residues: MIQPQTHLNVADNSGARELMCIRIIGASNRRYAHIGDIIVAVIKEAVPNMPLERSEVVRAVIVRTCKELKRDNGMIIRYDDNAAVVIDKEGNPKGTRIFGAIARELRQFNFTKIVSLAPEVL.

This sequence belongs to the universal ribosomal protein uL14 family. In terms of assembly, part of the 50S ribosomal subunit.

The protein localises to the plastid. The protein resides in the chloroplast. Its function is as follows. Binds to 23S rRNA. This Ipomoea purpurea (Common morning glory) protein is Large ribosomal subunit protein uL14c.